Consider the following 160-residue polypeptide: Crossover junction endodeoxyribonuclease RuvC (160 aa).

Active-site residues include D9, E68, and D141. Residues D9, E68, and D141 each coordinate Mg(2+).

The protein belongs to the RuvC family. As to quaternary structure, homodimer which binds Holliday junction (HJ) DNA. The HJ becomes 2-fold symmetrical on binding to RuvC with unstacked arms; it has a different conformation from HJ DNA in complex with RuvA. In the full resolvosome a probable DNA-RuvA(4)-RuvB(12)-RuvC(2) complex forms which resolves the HJ. Mg(2+) is required as a cofactor.

It is found in the cytoplasm. It carries out the reaction Endonucleolytic cleavage at a junction such as a reciprocal single-stranded crossover between two homologous DNA duplexes (Holliday junction).. The RuvA-RuvB-RuvC complex processes Holliday junction (HJ) DNA during genetic recombination and DNA repair. Endonuclease that resolves HJ intermediates. Cleaves cruciform DNA by making single-stranded nicks across the HJ at symmetrical positions within the homologous arms, yielding a 5'-phosphate and a 3'-hydroxyl group; requires a central core of homology in the junction. The consensus cleavage sequence is 5'-(A/T)TT(C/G)-3'. Cleavage occurs on the 3'-side of the TT dinucleotide at the point of strand exchange. HJ branch migration catalyzed by RuvA-RuvB allows RuvC to scan DNA until it finds its consensus sequence, where it cleaves and resolves the cruciform DNA. The sequence is that of Crossover junction endodeoxyribonuclease RuvC from Campylobacter jejuni subsp. jejuni serotype O:23/36 (strain 81-176).